Here is an 847-residue protein sequence, read N- to C-terminus: MAQRNGMSPRPPPLGRGRGAGGPSGVGSSPPSSCVPMGATSTAGTGASAAPTATPGHGVHRVEPRGPPGAPPSSGNNSNFWHGPERLLLSQIPVERQALTELEYQAMGAVWRAAFLANSTGRAMRKWSQRDAGTLLPLGRPYGFYARVTPRSQMNGVGATDLRQLSPRDAWIVLVATVVHEVDPAADPTVGDKAGHPEGLCAQDGLYLALGAGFRVFVYDLANNTLILAARDADEWFRHGAGEVVRLYRCNRLGVGTPRATLLPQPALRQTLLRAEEATALGRELRRRWAGTTVALQTPGRRLQPMVLLGAWQELAQYEPFASAPHPASLLTAVRRHLNQRLCCGWLALGAVLPARWLGCAAGPATGTTSPPAASGTETEAAGGDAPCAMAGAVGSAVTIPPQPYGGAGGSAICVPNADAHAVVGADATAAAAAAAAAPTVMVGPTAMAGPAASGTVPRAMLVVVLDELGAVFGYCPLDGHVYPLAAELSHFLRAGVLGALALGRESAPAAEAARRLLPELDREQWERPRWDALHLHPRAALWAREPHGQWEFMFREQRGDPIHDPVAFRLSDARTLGLDLTTVMTERQSQLPEKYIGFYQIRKPPWLMEQPPPPSRQTKPDAATMPPPLSAQASVSYALRYDDESWRPLSTVDDHKAWLDLDESHWVLGDSRPDDIKQRRLLKATQRRGAEIDRPMPVVPEECYDQRFTTEGHQVIPLCASEPEDDDEDPTYDELPSRPPQKHKPPDKPPRLCKTGPGPPPLPPKQRHGSTDGKVSAPRQSEHHKRQTRPPRPPPPKFGDRTAAHLSQNMRDMYLDMCTSSGHRPRPPAPPRPKKCQTHAPHHVHH.

Disordered stretches follow at residues 1 to 82 (MAQR…NFWH), 607 to 627 (WLME…ATMP), and 715 to 847 (QVIP…HVHH). The span at 16–25 (RGRGAGGPSG) shows a compositional bias: gly residues. The segment covering 26–56 (VGSSPPSSCVPMGATSTAGTGASAAPTATPG) has biased composition (low complexity). Residues 723 to 733 (EPEDDDEDPTY) show a composition bias toward acidic residues. A compositionally biased stretch (basic residues) spans 833–847 (RPKKCQTHAPHHVHH).

This sequence belongs to the herpesviridae US22 family. Interacts (via N-terminus) with the viral DNA polymerase accessory subunit UL44. Interacts (via C-terminus) with host EIF2AK2.

It is found in the virion. The protein localises to the host cytoplasm. It localises to the host nucleus. Functionally, acts as a transactivator along with IE2, and is required for oriLyt-dependent DNA replication in the transient transfection replication assay using native promoters. This chain is Protein IRS1 (IRS1), found in Human cytomegalovirus (strain Merlin) (HHV-5).